Reading from the N-terminus, the 101-residue chain is Small ribosomal subunit protein uS14 (101 aa).

It belongs to the universal ribosomal protein uS14 family. As to quaternary structure, part of the 30S ribosomal subunit. Contacts proteins S3 and S10.

Binds 16S rRNA, required for the assembly of 30S particles and may also be responsible for determining the conformation of the 16S rRNA at the A site. The polypeptide is Small ribosomal subunit protein uS14 (Burkholderia ambifaria (strain MC40-6)).